A 151-amino-acid polypeptide reads, in one-letter code: Brain ribonuclease (151 aa).

The segment at lysine 1–tyrosine 25 is disordered. Residues lysine 7 and arginine 10 each coordinate substrate. Catalysis depends on histidine 12, which acts as the Proton acceptor. Disulfide bonds link cysteine 26–cysteine 84, cysteine 40–cysteine 95, cysteine 58–cysteine 110, and cysteine 65–cysteine 72. Lysine 41 to threonine 45 is a binding site for substrate. N-linked (GlcNAc...) asparagine glycosylation is present at asparagine 62. The substrate site is built by lysine 66 and arginine 85. Histidine 119 functions as the Proton donor in the catalytic mechanism. Residue threonine 129 is glycosylated (O-linked (GalNAc...) threonine). Serine 133 carries O-linked (GalNAc...) serine glycosylation.

It belongs to the pancreatic ribonuclease family.

The protein resides in the secreted. The protein is Brain ribonuclease (BRN) of Axis porcinus (Hog deer).